Here is a 95-residue protein sequence, read N- to C-terminus: Integration host factor subunit beta (95 aa).

Residues Ala57–Tyr76 form a disordered region. Residues Lys65–Tyr76 show a composition bias toward basic and acidic residues.

Belongs to the bacterial histone-like protein family. In terms of assembly, heterodimer of an alpha and a beta chain.

Functionally, this protein is one of the two subunits of integration host factor, a specific DNA-binding protein that functions in genetic recombination as well as in transcriptional and translational control. This chain is Integration host factor subunit beta, found in Enterobacter sp. (strain 638).